Consider the following 131-residue polypeptide: uncharacterized protein (131 aa).

The region spanning 8-124 (DILVVDDDPD…ELIRLVQQYC (117 aa)) is the Response regulatory domain. A 4-aspartylphosphate modification is found at aspartate 57.

This is an uncharacterized protein from Leptolyngbya boryana (Plectonema boryanum).